We begin with the raw amino-acid sequence, 261 residues long: CD40 ligand (261 aa).

At 1–22 (MIETYNQPVPRSAATGPPVSMK) the chain is on the cytoplasmic side. A helical; Signal-anchor for type II membrane protein membrane pass occupies residues 23–43 (IFMYLLTVFLITQMIGSALFA). Residues 44–261 (VYLHRRLDKI…GFTSFGLLKL (218 aa)) lie on the Extracellular side of the membrane. A THD domain is found at 122 to 261 (IAAHVISEAS…GFTSFGLLKL (140 aa)). An intrachain disulfide couples Cys-178 to Cys-218. The N-linked (GlcNAc...) asparagine glycan is linked to Asn-240.

Belongs to the tumor necrosis factor family. In terms of assembly, homotrimer. Interacts with CD28. CD40 ligand, soluble form: Exists as either a monomer or a homotrimer. Forms a ternary complex between CD40 and integrins for CD40-CD40LG signaling. In terms of processing, the soluble form derives from the membrane form by proteolytic processing.

The protein localises to the cell membrane. It localises to the cell surface. Its subcellular location is the secreted. Functionally, cytokine that acts as a ligand to CD40/TNFRSF5. Costimulates T-cell proliferation and cytokine production. Its cross-linking on T-cells generates a costimulatory signal which enhances the production of IL4 and IL10 in conjunction with the TCR/CD3 ligation and CD28 costimulation. Induces the activation of NF-kappa-B. Induces the activation of kinases MAPK8 and PAK2 in T-cells. Mediates B-cell proliferation in the absence of co-stimulus as well as IgE production in the presence of IL4. Involved in immunoglobulin class switching. Acts as a ligand for integrins, specifically ITGA5:ITGB1 and ITGAV:ITGB3; both integrins and the CD40 receptor are required for activation of CD40-CD40LG signaling, which have cell-type dependent effects, such as B-cell activation, NF-kappa-B signaling and anti-apoptotic signaling. The chain is CD40 ligand (CD40LG) from Callithrix jacchus (White-tufted-ear marmoset).